The chain runs to 222 residues: Vesicle-associated membrane protein 724 (222 aa).

The Cytoplasmic segment spans residues 1-197 (MGQESFIYSF…LWYQNMKIKL (197 aa)). One can recognise a Longin domain in the interval 10 to 115 (FVARGTMILA…SLNKEFGPVM (106 aa)). The region spanning 131-191 (KLIKVKAQVS…TQVRRKLWYQ (61 aa)) is the v-SNARE coiled-coil homology domain. Residues 198-218 (VVLGILLLLVLIIWISVCHGF) traverse the membrane as a helical; Anchor for type IV membrane protein segment. The Vesicular portion of the chain corresponds to 219-222 (NCTD).

Belongs to the synaptobrevin family. In terms of tissue distribution, expressed in flowers, leaves, stems and roots.

It is found in the cell membrane. It localises to the early endosome membrane. Its function is as follows. Involved in the targeting and/or fusion of transport vesicles to their target membrane. The polypeptide is Vesicle-associated membrane protein 724 (Arabidopsis thaliana (Mouse-ear cress)).